The following is a 185-amino-acid chain: Ribosome-recycling factor (185 aa).

The interval 139-159 (IDSLEKDGDVSGDEADRAKKK) is disordered. The segment covering 141-159 (SLEKDGDVSGDEADRAKKK) has biased composition (basic and acidic residues).

This sequence belongs to the RRF family.

The protein localises to the cytoplasm. Functionally, responsible for the release of ribosomes from messenger RNA at the termination of protein biosynthesis. May increase the efficiency of translation by recycling ribosomes from one round of translation to another. This chain is Ribosome-recycling factor, found in Sorangium cellulosum (strain So ce56) (Polyangium cellulosum (strain So ce56)).